Here is a 124-residue protein sequence, read N- to C-terminus: Keratin-associated protein 12-2 (124 aa).

A run of 20 repeats spans residues 10–13 (CQAA), 14–18 (CVPSS), 19–23 (CQPSC), 24–28 (STSSP), 33–38 (CFTSSL), 39–43 (CQPTC), 44–48 (STSST), 49–52 (CQAT), 53–57 (CVPVS), 58–62 (YRPAV), 63–67 (CLPVT), 68–72 (YKPTL), 73–77 (CVTPS), 78–82 (CQSSV), 83–87 (FLPVS), 88–92 (YRPAV), 98–102 (CQSSG), 103–107 (CYQPS), 108–112 (CPTLV), and 113–117 (YRPIS). Residues 10–117 (CQAACVPSSC…CPTLVYRPIS (108 aa)) form a 20 X 5 AA approximate repeats region.

Belongs to the KRTAP type 12 family. As to quaternary structure, interacts with hair keratins.

In the hair cortex, hair keratin intermediate filaments are embedded in an interfilamentous matrix, consisting of hair keratin-associated proteins (KRTAP), which are essential for the formation of a rigid and resistant hair shaft through their extensive disulfide bond cross-linking with abundant cysteine residues of hair keratins. The matrix proteins include the high-sulfur and high-glycine-tyrosine keratins. The polypeptide is Keratin-associated protein 12-2 (Bos taurus (Bovine)).